Reading from the N-terminus, the 1238-residue chain is Erythroid differentiation-related factor 1 (1238 aa).

Disordered stretches follow at residues 1–38 (MGDA…AQGS), 220–268 (QPVS…GSEP), 517–561 (PKKE…SDDS), and 620–647 (KKES…RGGP). 3 stretches are compositionally biased toward low complexity: residues 9-38 (AEGP…AQGS), 223-241 (SSTA…NDSE), and 253-263 (SSVSEDPSASS). Residues 530 to 547 (NSDESYSEEEEEMPDSDE) are compositionally biased toward acidic residues. 2 TPR repeats span residues 693–726 (SKAY…HDTY) and 914–953 (AQAH…LGTR).

It is found in the nucleus. Functionally, transcription factor involved in erythroid differentiation. Involved in transcriptional activation of the globin gene. The polypeptide is Erythroid differentiation-related factor 1 (EDRF1) (Homo sapiens (Human)).